A 149-amino-acid polypeptide reads, in one-letter code: SsrA-binding protein (149 aa).

This sequence belongs to the SmpB family.

It is found in the cytoplasm. Its function is as follows. Required for rescue of stalled ribosomes mediated by trans-translation. Binds to transfer-messenger RNA (tmRNA), required for stable association of tmRNA with ribosomes. tmRNA and SmpB together mimic tRNA shape, replacing the anticodon stem-loop with SmpB. tmRNA is encoded by the ssrA gene; the 2 termini fold to resemble tRNA(Ala) and it encodes a 'tag peptide', a short internal open reading frame. During trans-translation Ala-aminoacylated tmRNA acts like a tRNA, entering the A-site of stalled ribosomes, displacing the stalled mRNA. The ribosome then switches to translate the ORF on the tmRNA; the nascent peptide is terminated with the 'tag peptide' encoded by the tmRNA and targeted for degradation. The ribosome is freed to recommence translation, which seems to be the essential function of trans-translation. The polypeptide is SsrA-binding protein (Wolbachia pipientis wMel).